The sequence spans 151 residues: uncharacterized protein (151 aa).

Residues K2–Q133 enclose the Response regulatory domain. Residue D53 is modified to 4-aspartylphosphate.

This is an uncharacterized protein from Sinorhizobium fredii (strain NBRC 101917 / NGR234).